Consider the following 341-residue polypeptide: UPF0324 membrane protein SMU_2059c (341 aa).

The next 11 helical transmembrane spans lie at 7–24, 28–47, 68–85, 90–107, 120–142, 147–169, 178–200, 211–233, 254–276, 291–310, and 317–339; these read KLSG…AWFL, FPLV…LAIF, FAVV…VLTV, LPII…AFLL, LVGV…VIQA, IAQS…PTLG, GFAL…AAAW, GATI…LSFY, VFPM…TALG, FCIV…VKLV, and IVLG…HLLG.

It belongs to the UPF0324 family.

Its subcellular location is the cell membrane. The chain is UPF0324 membrane protein SMU_2059c from Streptococcus mutans serotype c (strain ATCC 700610 / UA159).